The sequence spans 28 residues: RRCFITPNVRSERCPPGQEVCFTKTXDG.

A disulfide bridge connects residues cysteine 3 and cysteine 21.

This sequence belongs to the three-finger toxin family. Long-chain subfamily. Type II alpha-neurotoxin sub-subfamily. Heterotrimer composed of this alpha-neurotoxin-like peptide of 8 kDa, a neurotoxic phospholipase of 16 kDa (AC Q7LZG2) and a serine protease inhibitor of 7 kDa (AC B7S4N9) at an approximate stoichiometry of 1:1:4; non-covalently linked. Expressed by the venom gland.

It is found in the secreted. Functionally, the heterotrimer blocks the voltage-dependent L-type calcium channels (Cav1/CACNA1) from the heart, and the small conductance calcium-activated potassium channels (KCa2/KCNN) in the chromaffin cells and in the brain. Is very toxic to mice. This chain is Taicatoxin, alpha-neurotoxin-like component, found in Oxyuranus scutellatus scutellatus (Australian taipan).